Reading from the N-terminus, the 2528-residue chain is Highly reducing polyketide synthase pspA (2528 aa).

The interval 1–53 (MLAQDVEFVDLPPPEATAGAATTDNETSSFNSNPVPTPSEASSIGPPHQLPVP) is disordered. Residues 24-42 (DNETSSFNSNPVPTPSEAS) are compositionally biased toward polar residues. The Ketosynthase family 3 (KS3) domain maps to 63 to 483 (VEPMAICGMA…GSNAHVLLGS (421 aa)). Active-site for beta-ketoacyl synthase activity residues include Cys-235, His-371, and His-406. Residues 590 to 909 (TFTGQGAQWA…HKDLLKAVGE (320 aa)) form a malonyl-CoA:ACP transacylase (MAT) domain region. The tract at residues 961-1089 (HDILGSRVLE…GQVCAGSDRE (129 aa)) is N-terminal hotdog fold. The tract at residues 961-1230 (HDILGSRVLE…VSNGHVTIDI (270 aa)) is dehydratase (DH) domain. A PKS/mFAS DH domain is found at 961 to 1244 (HDILGSRVLE…MSAIGDAADA (284 aa)). The active-site Proton acceptor; for dehydratase activity is His-993. Positions 1099–1244 (PRQLSRRGWY…MSAIGDAADA (146 aa)) are C-terminal hotdog fold. Asp-1160 serves as the catalytic Proton donor; for dehydratase activity. The tract at residues 1409 to 1587 (VFLELLAHRK…GFSGINLVSH (179 aa)) is methyltransferase (CMet) domain. Residues 1803–2119 (GLVDTLCWKS…RGQHIGKIVI (317 aa)) form an enoyl reductase (ER) (ER) domain region. Positions 2143 to 2322 (RAYLFVGGLG…ASTVNIGVIQ (180 aa)) are ketoreductase (KR) domain. The Carrier domain maps to 2447-2525 (ETAELLAGEI…DLGVLAQKKL (79 aa)). Ser-2485 carries the post-translational modification O-(pantetheine 4'-phosphoryl)serine.

The enzyme catalyses 9 malonyl-CoA + acetyl-CoA + S-adenosyl-L-methionine + 13 NADPH + 20 H(+) = soppiline A + S-adenosyl-L-homocysteine + 9 CO2 + 13 NADP(+) + 10 CoA + 7 H2O. It functions in the pathway secondary metabolite biosynthesis. In terms of biological role, highly reducing polyketide synthase; part of the gene cluster that mediates the biosynthesis of the alkylresorcinols called soppilines. The biosynthesis starts with the HR-PKS pspA-catalyzed carbon chain assembly through nine chain elongation cycles, using acetyl CoA and malonyl CoA as a starter and extender units, respectively, to produce the polyketide soppiline A. In the first round, the KR, DH, and CMeT domains work to produce 2-methyl-2-butenyl thioester. In rounds 2 to 5, the KR, DH, and ER domains fully catalyze the reduction of the elongated beta-ketothioester, resulting in the insertion of eight methylene units. The unusual Z,E,Z-triene motif is likely constructed during rounds 6 to 8. Typically, the DH domain introduces a double bond at an alpha,beta-position of an elongated polyketide chain, with the dehydration of a beta-hydroxy group. The last extension cycle would be carried out with L-oriented beta-ketoreduction by the KR domain to produce beta-hydroxy carboxylic acid soppiline A. The type III PKS pspB intercepts the elongated polyketide chain at round 8 from the HR-PKS pspA, followed by a tri-keto extension and decarboxylative aldol cyclization to produce 1,3,5-trisubstituted alkylresorcinol soppiline B. Subsequently, the cytochrome P450 monooxygenase pspC catalyzes three-step oxidations at the C-4 methyl group to carboxylic acid to yield soppiline C. The polypeptide is Highly reducing polyketide synthase pspA (Penicillium soppii).